A 128-amino-acid polypeptide reads, in one-letter code: 3-aminoacrylate deaminase RutC (128 aa).

Belongs to the RutC family.

It carries out the reaction (Z)-3-aminoacrylate + H2O + H(+) = 3-oxopropanoate + NH4(+). Involved in pyrimidine catabolism. Catalyzes the deamination of 3-aminoacrylate to malonic semialdehyde, a reaction that can also occur spontaneously. RutC may facilitate the reaction and modulate the metabolic fitness, rather than catalyzing essential functions. In Serratia proteamaculans (strain 568), this protein is 3-aminoacrylate deaminase RutC.